The chain runs to 78 residues: Large ribosomal subunit protein bL28 (78 aa).

The disordered stretch occupies residues 1 to 21 (MSRVCQVTGKKPMVGNNRSHA).

The protein belongs to the bacterial ribosomal protein bL28 family.

The protein is Large ribosomal subunit protein bL28 of Shewanella piezotolerans (strain WP3 / JCM 13877).